The sequence spans 86 residues: Small ribosomal subunit protein bS20 (86 aa).

It belongs to the bacterial ribosomal protein bS20 family.

Functionally, binds directly to 16S ribosomal RNA. This chain is Small ribosomal subunit protein bS20, found in Bifidobacterium longum (strain DJO10A).